Reading from the N-terminus, the 388-residue chain is Salivary protein Tsal2A (388 aa).

Positions 1 to 18 are cleaved as a signal peptide; the sequence is MSLLYGLLILAFTRSCLV. N-linked (GlcNAc...) asparagine glycosylation is present at Asn-260.

It belongs to the DNA/RNA non-specific endonuclease family. A divalent metal cation is required as a cofactor. As to expression, saliva (at protein level).

The protein resides in the secreted. In terms of biological role, binds double-stranded DNA (dsDNA) with high affinity. Binds double-stranded RNA. Binds single-stranded DNA with lower affinity and with a preference for purine-rich sequences. Shows residual nuclease activity for dsDNA. Facilitates blood meal intake by lowering the local viscosity created by the release of host DNA. The polypeptide is Salivary protein Tsal2A (Glossina morsitans morsitans (Savannah tsetse fly)).